The sequence spans 332 residues: Cysteine and histidine-rich domain-containing protein 1 (332 aa).

An N-acetylalanine modification is found at Ala-2. Residues 2 to 77 (ALLCYNRACG…KPPEPVKPEV (76 aa)) are interaction with PPP5C. Residues Cys-5, Cys-10, Cys-24, His-27, Cys-42, and Cys-43 each coordinate Zn(2+). CHORD domains lie at 5–64 (CYNR…KGRH) and 157–216 (CKNG…KGRH). The residue at position 47 (Thr-47) is a Phosphothreonine. Ser-51 carries the phosphoserine modification. 10 residues coordinate Zn(2+): Cys-59, His-64, Cys-157, Cys-162, Cys-176, His-179, Cys-194, Cys-195, Cys-211, and His-216. Positions 62–82 (GRHNSEKPPEPVKPEVKTTEK) are disordered. Residues 64–82 (HNSEKPPEPVKPEVKTTEK) are compositionally biased toward basic and acidic residues. Positions 65 to 316 (NSEKPPEPVK…AEPMQWASLE (252 aa)) are interaction with HSP90AA1 and HSP90AB1. The CS domain occupies 227-316 (VVPCRHDWHQ…AEPMQWASLE (90 aa)).

As to quaternary structure, interacts with HSP90AA1, HSP90AB1, PPP5C, ROCK1 and ROCK2.

Regulates centrosome duplication, probably by inhibiting the kinase activity of ROCK2. Proposed to act as co-chaperone for HSP90. May play a role in the regulation of NOD1 via a HSP90 chaperone complex. In vitro, has intrinsic chaperone activity. This function may be achieved by inhibiting association of ROCK2 with NPM1. Plays a role in ensuring the localization of the tyrosine kinase receptor EGFR to the plasma membrane, and thus ensures the subsequent regulation of EGFR activity and EGF-induced actin cytoskeleton remodeling. Involved in stress response. Prevents tumorigenesis. The protein is Cysteine and histidine-rich domain-containing protein 1 (CHORDC1) of Macaca fascicularis (Crab-eating macaque).